The chain runs to 92 residues: Small ribosomal subunit protein uS19 (92 aa).

It belongs to the universal ribosomal protein uS19 family.

Functionally, protein S19 forms a complex with S13 that binds strongly to the 16S ribosomal RNA. The sequence is that of Small ribosomal subunit protein uS19 from Cereibacter sphaeroides (strain ATCC 17029 / ATH 2.4.9) (Rhodobacter sphaeroides).